The sequence spans 400 residues: Phosphoglycerate kinase (400 aa).

Substrate is bound by residues 19 to 21, arginine 38, 61 to 64, arginine 124, and arginine 161; these read DLN and HLGR. Residues lysine 211, glycine 299, glutamate 330, and 356-359 each bind ATP; that span reads GGDS.

Belongs to the phosphoglycerate kinase family. In terms of assembly, monomer.

The protein resides in the cytoplasm. It carries out the reaction (2R)-3-phosphoglycerate + ATP = (2R)-3-phospho-glyceroyl phosphate + ADP. Its pathway is carbohydrate degradation; glycolysis; pyruvate from D-glyceraldehyde 3-phosphate: step 2/5. This Parafrankia sp. (strain EAN1pec) protein is Phosphoglycerate kinase.